Reading from the N-terminus, the 201-residue chain is Urease accessory protein UreG (201 aa).

11-18 (GPVGSGKT) contributes to the GTP binding site.

It belongs to the SIMIBI class G3E GTPase family. UreG subfamily. Homodimer. UreD, UreF and UreG form a complex that acts as a GTP-hydrolysis-dependent molecular chaperone, activating the urease apoprotein by helping to assemble the nickel containing metallocenter of UreC. The UreE protein probably delivers the nickel.

The protein resides in the cytoplasm. Its function is as follows. Facilitates the functional incorporation of the urease nickel metallocenter. This process requires GTP hydrolysis, probably effectuated by UreG. The sequence is that of Urease accessory protein UreG from Synechococcus sp. (strain CC9605).